The following is a 190-amino-acid chain: Recombination protein RecR (190 aa).

The segment at 58-73 (CEQCGALSENELCEIC) adopts a C4-type zinc-finger fold. Residues 81-167 (NILCIVESPK…TFSKIAQGIP (87 aa)) form the Toprim domain.

The protein belongs to the RecR family.

Functionally, may play a role in DNA repair. It seems to be involved in an RecBC-independent recombinational process of DNA repair. It may act with RecF and RecO. The sequence is that of Recombination protein RecR from Campylobacter jejuni subsp. jejuni serotype O:23/36 (strain 81-176).